Reading from the N-terminus, the 110-residue chain is Large ribosomal subunit protein uL22 (110 aa).

Belongs to the universal ribosomal protein uL22 family. As to quaternary structure, part of the 50S ribosomal subunit.

Functionally, this protein binds specifically to 23S rRNA; its binding is stimulated by other ribosomal proteins, e.g. L4, L17, and L20. It is important during the early stages of 50S assembly. It makes multiple contacts with different domains of the 23S rRNA in the assembled 50S subunit and ribosome. In terms of biological role, the globular domain of the protein is located near the polypeptide exit tunnel on the outside of the subunit, while an extended beta-hairpin is found that lines the wall of the exit tunnel in the center of the 70S ribosome. The polypeptide is Large ribosomal subunit protein uL22 (Alkaliphilus oremlandii (strain OhILAs) (Clostridium oremlandii (strain OhILAs))).